The following is a 228-amino-acid chain: UPF0758 protein CLD_1541 (228 aa).

One can recognise an MPN domain in the interval 106 to 228 (KINTPLDVSN…YVSMKEKGTI (123 aa)). Residues His-177, His-179, and Asp-190 each coordinate Zn(2+). Positions 177-190 (HNHPSGDPTPSKED) match the JAMM motif motif.

Belongs to the UPF0758 family.

In Clostridium botulinum (strain Okra / Type B1), this protein is UPF0758 protein CLD_1541.